The chain runs to 386 residues: 11-beta-hydroxysteroid dehydrogenase type 2 (386 aa).

Residue 82-111 (TRAVLITGCDTGFGKETAKKLDAMGFTVLA) coordinates NAD(+). Serine 219 is a substrate binding site. The active-site Proton acceptor is tyrosine 232.

The protein belongs to the short-chain dehydrogenases/reductases (SDR) family. Interacts with ligand-free cytoplasmic NR3C2. As to expression, highly expressed in kidney. Also found in colon and small intestine. Not expressed in the adrenal gland. Expressed in uterus.

It localises to the microsome. The protein resides in the endoplasmic reticulum. It carries out the reaction an 11beta-hydroxysteroid + NAD(+) = an 11-oxosteroid + NADH + H(+). The catalysed reaction is corticosterone + NAD(+) = 11-dehydrocorticosterone + NADH + H(+). It catalyses the reaction 11beta,17beta-dihydroxyandrost-4-ene-3-one + NAD(+) = 17beta-hydroxyandrost-4-ene-3,11-dione + NADH + H(+). The enzyme catalyses 11beta-hydroxyandrost-4-ene-3,17-dione + NAD(+) = androst-4-ene-3,11,17-trione + NADH + H(+). It functions in the pathway steroid metabolism. With respect to regulation, inhibited by glycyrrhetinic acid. Induced by progesterone, through the Ihh signaling pathway. Its function is as follows. Catalyzes the conversion of biologically active 11beta-hydroxyglucocorticoids (11beta-hydroxysteroid) such as corticosterone, to inactive 11-ketoglucocorticoids (11-oxosteroid) such as 11-dehydrocorticosterone, in the presence of NAD(+). Functions as a dehydrogenase (oxidase), thereby decreasing the concentration of active glucocorticoids, thus protecting the nonselective mineralocorticoid receptor from occupation by glucocorticoids. Plays an important role in maintaining glucocorticoids balance during preimplantation and protects the fetus from excessive maternal corticosterone exposure. Catalyzes the oxidation of 11beta-hydroxytestosterone (11beta,17beta-dihydroxyandrost-4-ene-3-one) to 11-ketotestosterone (17beta-hydroxyandrost-4-ene-3,11-dione), a major bioactive androgen. Catalyzes the conversion of 11beta-hydroxyandrostenedione (11beta-hydroxyandrost-4-ene-3,17-dione) to 11-ketoandrostenedione (androst-4-ene-3,11,17-trione), which can be further metabolized to 11-ketotestosterone. Converts 7-beta-25-dihydroxycholesterol to 7-oxo-25-hydroxycholesterol in vitro. 7-beta-25-dihydroxycholesterol (not 7-oxo-25-hydroxycholesterol) acts as a ligand for the G-protein-coupled receptor (GPCR) Epstein-Barr virus-induced gene 2 (EBI2) and may thereby regulate immune cell migration. This chain is 11-beta-hydroxysteroid dehydrogenase type 2 (Hsd11b2), found in Mus musculus (Mouse).